The following is a 3122-amino-acid chain: tRNA nuclease CdiA-2 (3122 aa).

Residues 36 to 205 (RAGVVPAWLS…ATLTTGNPNF (170 aa)) form a two-partner system transport domain (TPS) region. The chain crosses the membrane as a helical span at residues 54 to 74 (VALAVLVAAGVVPIWVNAQVV). Residues 256 to 1254 (VVAGSNQVDY…GGSVAIQASG (999 aa)) are FHA-1. Residues 492 to 512 (GMTLGGGSLSNQGGRANSQGP) form a disordered region. The span at 500-512 (LSNQGGRANSQGP) shows a compositional bias: polar residues. Residues 1345–1635 (TRRVMQTSGN…SATAVNVLSN (291 aa)) form a receptor binding domain (RBD) region. Positions 1790 to 1845 (TAGNIDLKNTQVFTNSGTVKADTTLALQGKQIDNAFGALQSGGLTSLDTTGNVDLT) are periplasmic FHA-1 repeat (pFR). The tract at residues 1947-2085 (SDTDLNSATG…TERHVYNSRE (139 aa)) is FHA-2. Disordered regions lie at residues 2002-2031 (TSTINANSSGDQGNRSYAETRHGSDQALTG), 2151-2174 (TTSQDTSQSSTTYQEQHSGLMSGG), and 2325-2352 (IGVQVSVGSSHSSMQSSEDQTIQRGSSI). The interval 2086–2825 (THSRSGVVSG…SAGAAMASNV (740 aa)) is pretoxin (PT) domain. Composition is skewed to low complexity over residues 2151–2170 (TTSQDTSQSSTTYQEQHSGL) and 2325–2341 (IGVQVSVGSSHSSMQSS). The span at 2342–2352 (EDQTIQRGSSI) shows a compositional bias: polar residues. The tract at residues 2821–3122 (MASNVELYNA…NITIIKPKGN (302 aa)) is C-terminal effector domain (CT), has tRNA nuclease activity. The short motif at 2826 to 2829 (ELYN) is the ELYN C-terminal motif element. A disordered region spans residues 2948 to 3000 (GATDRTPPSNAILSNSNSDNNSTQGSQSGTVTKTPNPEATGSLSGKPTQIPPL). A truncated CT domain, has tRNA nuclease activity, sufficient for interaction with CdiI-2 region spans residues 2948–3122 (GATDRTPPSN…NITIIKPKGN (175 aa)). Residues 2953–2994 (TPPSNAILSNSNSDNNSTQGSQSGTVTKTPNPEATGSLSGKP) are compositionally biased toward polar residues. The interval 2987 to 3122 (TGSLSGKPTQ…NITIIKPKGN (136 aa)) is has tRNase activity. Residues E3012, D3039, D3048, and K3067 contribute to the active site.

The protein in the N-terminal section; belongs to the CdiA toxin family. As to quaternary structure, interacts with cognate immunity protein CdiI, which blocks its tRNA nuclease activity. The truncated CT fragment (residues 2948-3122) specifically interacts with cognate CdiI which inhibits the tRNA nuclease activity. The truncated CT is more stable in vitro than the original CT fragment characterized in E.coli.

It localises to the membrane. The protein resides in the secreted. Its subcellular location is the target cell. The protein localises to the target cell cytoplasm. In terms of biological role, toxic component of a toxin-immunity protein module, which functions as a cellular contact-dependent growth inhibition (CDI) system. CDI modules allow bacteria to communicate with and inhibit the growth of closely related neighboring bacteria in a contact-dependent fashion. The C-terminal 301 residues (the CT fragment) cleaves near the C-terminus of E.coli tRNA1B(Ala), probably preventing tRNA charging, and inhibits growth in E.coli. A truncated CT fragment (residues 2948-3122) has tRNA endonuclease activity on several B.thailandensis tRNAs as well as tRNA2(Arg) where it cleaves after A-70 and U-71. Inactive CT domain binds tRNA, probably in a 1:1 complex. Toxic activity is neutralized by coexpression of the cognate immunity protein CdiI in E.coli, but not by non-cognate immunity proteins from other strains of B.pseudomallei. May use lipopolysaccharide as its target cell receptor. Probably gains access to the cytoplasm of target cells (B.thailandensis strain E264) by using integral inner membrane protein BTH_II0599. Protein BTH_I0359 is also implicated in an unknown fashion in CDI in B.thailandensis strain E264. Functionally, expression of this cdiAIB locus in B.thailandensis confers protection against other bacteria carrying the locus; growth inhibition requires cellular contact. Its function is as follows. The CdiA protein is thought to be exported from the cell through the central lumen of CdiB, the other half of its two-partner system (TPS). The TPS domain probably remains associated with CdiB while the FHA-1 domain forms an extended filament with the receptor-binding domain (RBD) at its extremity; in the secretion arrested state the C-terminus of the RBD domain form a hairpin-like structure as the FHA-2, PT and CT domains are periplasmic. Upon binding to a target cell outer membrane receptor (possibly a lipoprotein in this CDI) a signal is transmitted to activate secretion. The filament elongates slightly, the rest of CdiA is secreted and the FHA-2 domain becomes stably associated with the target cell's outer membrane where it facilitates entry of the toxic CT domain into the target cell periplasm. From there the toxic CT domain is cleaved and gains access to the target cell cytoplasm via an inner membrane protein (probably inner membrane protein BTH_II0599). The chain is tRNA nuclease CdiA-2 (cdiA2) from Burkholderia pseudomallei (strain 1026b).